The primary structure comprises 552 residues: 5'-AMP-activated protein kinase catalytic subunit alpha-2 (552 aa).

The Protein kinase domain maps to 16–268; the sequence is YVLGDTLGVG…IKDIREHEWF (253 aa). ATP contacts are provided by residues 22–30 and lysine 45; that span reads LGVGTFGKV. The active-site Proton acceptor is aspartate 139. Residue threonine 172 is modified to Phosphothreonine; by LKB1 and CaMKK2. Phosphothreonine is present on threonine 258. An AIS region spans residues 291-376; sequence EAVKEVCEKF…PERMPPLIAD (86 aa). Position 377 is a phosphoserine (serine 377). The segment at 477 to 521 is disordered; it reads VEQRSGSSTPQRSCSAAGLHRPRSSFDSTTAESHSLSGSLTGSLT. Residues 480-490 are compositionally biased toward polar residues; the sequence is RSGSSTPQRSC. Position 491 is a phosphoserine (serine 491). Positions 501–510 are enriched in polar residues; that stretch reads SFDSTTAESH. A compositionally biased stretch (low complexity) spans 511-521; the sequence is SLSGSLTGSLT.

Belongs to the protein kinase superfamily. CAMK Ser/Thr protein kinase family. SNF1 subfamily. As to quaternary structure, AMPK is a heterotrimer of an alpha catalytic subunit (PRKAA1 or PRKAA2), a beta (PRKAB1 or PRKAB2) and a gamma non-catalytic subunits (PRKAG1, PRKAG2 or PRKAG3). Interacts with FNIP1 and FNIP2. Associates with internalized insulin receptor/INSR complexes on Golgi/endosomal membranes; PRKAA2/AMPK2 together with ATIC and HACD3/PTPLAD1 is proposed to be part of a signaling network regulating INSR autophosphorylation and endocytosis. Interacts with ARF6. The phosphorylated form at Thr-172 mediated by CamKK2 interacts with ACSS2. Requires Mg(2+) as cofactor. Ubiquitinated. Post-translationally, phosphorylated at Thr-172 by STK11/LKB1 in complex with STE20-related adapter-alpha (STRADA) pseudo kinase and CAB39. Also phosphorylated at Thr-172 by CAMKK2; triggered by a rise in intracellular calcium ions, without detectable changes in the AMP/ATP ratio. CAMKK1 can also phosphorylate Thr-172, but at much lower level. Dephosphorylated by protein phosphatase 2A and 2C (PP2A and PP2C). Phosphorylated by ULK1; leading to negatively regulate AMPK activity and suggesting the existence of a regulatory feedback loop between ULK1 and AMPK. Dephosphorylated by PPM1A and PPM1B at Thr-172 (mediated by STK11/LKB1).

It localises to the cytoplasm. It is found in the nucleus. It catalyses the reaction L-seryl-[protein] + ATP = O-phospho-L-seryl-[protein] + ADP + H(+). The catalysed reaction is L-threonyl-[protein] + ATP = O-phospho-L-threonyl-[protein] + ADP + H(+). It carries out the reaction L-seryl-[acetyl-CoA carboxylase] + ATP = O-phospho-L-seryl-[acetyl-CoA carboxylase] + ADP + H(+). The enzyme catalyses L-seryl-[3-hydroxy-3-methylglutaryl-coenzyme A reductase] + ATP = O-phospho-L-seryl-[3-hydroxy-3-methylglutaryl-coenzyme A reductase] + ADP + H(+). Its activity is regulated as follows. Activated by phosphorylation on Thr-172. Binding of AMP to non-catalytic gamma subunit (PRKAG1, PRKAG2 or PRKAG3) results in allosteric activation, inducing phosphorylation on Thr-172. AMP-binding to gamma subunit also sustains activity by preventing dephosphorylation of Thr-172. ADP also stimulates Thr-172 phosphorylation, without stimulating already phosphorylated AMPK. ATP promotes dephosphorylation of Thr-172, rendering the enzyme inactive. Under physiological conditions AMPK mainly exists in its inactive form in complex with ATP, which is much more abundant than AMP. AMPK is activated by antihyperglycemic drug metformin, a drug prescribed to patients with type 2 diabetes: in vivo, metformin seems to mainly inhibit liver gluconeogenesis. However, metformin can be used to activate AMPK in muscle and other cells in culture or ex vivo. Selectively inhibited by compound C (6-[4-(2-Piperidin-1-yl-ethoxy)-phenyl)]-3-pyridin-4-yl-pyyrazolo[1,5-a] pyrimidine. Activated by resveratrol, a natural polyphenol present in red wine, and S17834, a synthetic polyphenol. Salicylate/aspirin directly activates kinase activity, primarily by inhibiting Thr-172 dephosphorylation. In terms of biological role, catalytic subunit of AMP-activated protein kinase (AMPK), an energy sensor protein kinase that plays a key role in regulating cellular energy metabolism. In response to reduction of intracellular ATP levels, AMPK activates energy-producing pathways and inhibits energy-consuming processes: inhibits protein, carbohydrate and lipid biosynthesis, as well as cell growth and proliferation. AMPK acts via direct phosphorylation of metabolic enzymes, and by longer-term effects via phosphorylation of transcription regulators. Regulates lipid synthesis by phosphorylating and inactivating lipid metabolic enzymes such as ACACA, ACACB, GYS1, HMGCR and LIPE; regulates fatty acid and cholesterol synthesis by phosphorylating acetyl-CoA carboxylase (ACACA and ACACB) and hormone-sensitive lipase (LIPE) enzymes, respectively. Promotes lipolysis of lipid droplets by mediating phosphorylation of isoform 1 of CHKA (CHKalpha2). Regulates insulin-signaling and glycolysis by phosphorylating IRS1, PFKFB2 and PFKFB3. Involved in insulin receptor/INSR internalization. AMPK stimulates glucose uptake in muscle by increasing the translocation of the glucose transporter SLC2A4/GLUT4 to the plasma membrane, possibly by mediating phosphorylation of TBC1D4/AS160. Regulates transcription and chromatin structure by phosphorylating transcription regulators involved in energy metabolism such as CRTC2/TORC2, FOXO3, histone H2B, HDAC5, MEF2C, MLXIPL/ChREBP, EP300, HNF4A, p53/TP53, SREBF1, SREBF2 and PPARGC1A. Acts as a key regulator of glucose homeostasis in liver by phosphorylating CRTC2/TORC2, leading to CRTC2/TORC2 sequestration in the cytoplasm. In response to stress, phosphorylates 'Ser-36' of histone H2B (H2BS36ph), leading to promote transcription. Acts as a key regulator of cell growth and proliferation by phosphorylating FNIP1, TSC2, RPTOR, WDR24 and ATG1/ULK1: in response to nutrient limitation, negatively regulates the mTORC1 complex by phosphorylating RPTOR component of the mTORC1 complex and by phosphorylating and activating TSC2. Also phosphorylates and inhibits GATOR2 subunit WDR24 in response to nutrient limitation, leading to suppress glucose-mediated mTORC1 activation. In response to energetic stress, phosphorylates FNIP1, inactivating the non-canonical mTORC1 signaling, thereby promoting nuclear translocation of TFEB and TFE3, and inducing transcription of lysosomal or autophagy genes. In response to nutrient limitation, promotes autophagy by phosphorylating and activating ATG1/ULK1. In that process, it also activates WDR45/WIPI4. Phosphorylates CASP6, thereby preventing its autoprocessing and subsequent activation. AMPK also acts as a regulator of circadian rhythm by mediating phosphorylation of CRY1, leading to destabilize it. May regulate the Wnt signaling pathway by phosphorylating CTNNB1, leading to stabilize it. Also acts as a regulator of cellular polarity by remodeling the actin cytoskeleton; probably by indirectly activating myosin. Also phosphorylates CFTR, EEF2K, KLC1, NOS3 and SLC12A1. Plays an important role in the differential regulation of pro-autophagy (composed of PIK3C3, BECN1, PIK3R4 and UVRAG or ATG14) and non-autophagy (composed of PIK3C3, BECN1 and PIK3R4) complexes, in response to glucose starvation. Can inhibit the non-autophagy complex by phosphorylating PIK3C3 and can activate the pro-autophagy complex by phosphorylating BECN1. Upon glucose starvation, promotes ARF6 activation in a kinase-independent manner leading to cell migration. Upon glucose deprivation mediates the phosphorylation of ACSS2 at 'Ser-659', which exposes the nuclear localization signal of ACSS2, required for its interaction with KPNA1 and nuclear translocation. Upon stress, regulates mitochondrial fragmentation through phosphorylation of MTFR1L. The chain is 5'-AMP-activated protein kinase catalytic subunit alpha-2 from Homo sapiens (Human).